The chain runs to 256 residues: MLPWLPAHRVAFPAVEHALREPDGLLAAGGDLTPAWLRCAYRHGIFPWFAPGEPILWWSPDPRLVLFPEEIHVRRSLAKRLRNAGFTVTFDHAFEAVITACATTRAAAEGTWITPAMHAAYYRLHIEGDAHSVEVWRDGELVGGLYGIALGGVFFGESMFSRVADASKVALVHLARHLAAHGGRLIDCQVHTPHLASLGARCIARTTFIDYLDQYVSAPVSSSLWPAAPSADGCTGASRHGPGADMRRGDMSREST.

Positions 232–256 (DGCTGASRHGPGADMRRGDMSREST) are disordered. Over residues 245 to 256 (DMRRGDMSREST) the composition is skewed to basic and acidic residues.

Belongs to the L/F-transferase family.

The protein localises to the cytoplasm. The enzyme catalyses N-terminal L-lysyl-[protein] + L-leucyl-tRNA(Leu) = N-terminal L-leucyl-L-lysyl-[protein] + tRNA(Leu) + H(+). The catalysed reaction is N-terminal L-arginyl-[protein] + L-leucyl-tRNA(Leu) = N-terminal L-leucyl-L-arginyl-[protein] + tRNA(Leu) + H(+). It carries out the reaction L-phenylalanyl-tRNA(Phe) + an N-terminal L-alpha-aminoacyl-[protein] = an N-terminal L-phenylalanyl-L-alpha-aminoacyl-[protein] + tRNA(Phe). In terms of biological role, functions in the N-end rule pathway of protein degradation where it conjugates Leu, Phe and, less efficiently, Met from aminoacyl-tRNAs to the N-termini of proteins containing an N-terminal arginine or lysine. In Chromohalobacter salexigens (strain ATCC BAA-138 / DSM 3043 / CIP 106854 / NCIMB 13768 / 1H11), this protein is Leucyl/phenylalanyl-tRNA--protein transferase.